Reading from the N-terminus, the 370-residue chain is Nociceptin receptor (370 aa).

Topologically, residues Met1–Leu48 are extracellular. Residues Asn21, Asn28, and Asn39 are each glycosylated (N-linked (GlcNAc...) asparagine). Residues Gly49–Tyr74 traverse the membrane as a helical segment. The Cytoplasmic portion of the chain corresponds to Val75–Asn87. Residues Ile88–Thr109 traverse the membrane as a helical segment. Topologically, residues Asp110 to Lys124 are extracellular. A disulfide bridge links Cys123 with Cys200. Residues Ala125–Val146 form a helical membrane-spanning segment. Over Asp147–Ser165 the chain is Cytoplasmic. The helical transmembrane segment at Lys166 to Met188 threads the bilayer. Topologically, residues Gly189–Trp211 are extracellular. A helical transmembrane segment spans residues Gly212–Ser236. Residues Leu237 to Leu264 are Cytoplasmic-facing. Residues Val265 to Val285 traverse the membrane as a helical segment. The Extracellular portion of the chain corresponds to Gln286–Val300. The helical transmembrane segment at Leu301–Leu322 threads the bilayer. Over Asp323–Ala370 the chain is Cytoplasmic. Cys334 is lipidated: S-palmitoyl cysteine.

The protein belongs to the G-protein coupled receptor 1 family. In terms of processing, phosphorylation at Ser-363 requires GRK3. Detected in brain cortex, stomach, ileum, jejunum and colon.

It is found in the cell membrane. Its subcellular location is the cytoplasmic vesicle. G-protein coupled opioid receptor that functions as a receptor for the endogenous neuropeptide nociceptin. Ligand binding causes a conformation change that triggers signaling via guanine nucleotide-binding proteins (G proteins) and modulates the activity of down-stream effectors. Signaling via G proteins mediates inhibition of adenylate cyclase activity and calcium channel activity. Arrestins modulate signaling via G proteins and mediate the activation of alternative signaling pathways that lead to the activation of MAP kinases. Plays a role in modulating nociception and the perception of pain. Plays a role in the regulation of locomotor activity by the neuropeptide nociceptin. In Sus scrofa (Pig), this protein is Nociceptin receptor (OPRL1).